A 114-amino-acid polypeptide reads, in one-letter code: UPF0145 protein TT_C1581 (114 aa).

It belongs to the UPF0145 family.

The polypeptide is UPF0145 protein TT_C1581 (Thermus thermophilus (strain ATCC BAA-163 / DSM 7039 / HB27)).